Reading from the N-terminus, the 510-residue chain is Probable cytosol aminopeptidase (510 aa).

The Mn(2+) site is built by lysine 272 and aspartate 277. Lysine 284 is an active-site residue. Aspartate 296, aspartate 355, and glutamate 357 together coordinate Mn(2+). The active site involves arginine 359.

It belongs to the peptidase M17 family. Requires Mn(2+) as cofactor.

It is found in the cytoplasm. The catalysed reaction is Release of an N-terminal amino acid, Xaa-|-Yaa-, in which Xaa is preferably Leu, but may be other amino acids including Pro although not Arg or Lys, and Yaa may be Pro. Amino acid amides and methyl esters are also readily hydrolyzed, but rates on arylamides are exceedingly low.. It carries out the reaction Release of an N-terminal amino acid, preferentially leucine, but not glutamic or aspartic acids.. In terms of biological role, presumably involved in the processing and regular turnover of intracellular proteins. Catalyzes the removal of unsubstituted N-terminal amino acids from various peptides. This chain is Probable cytosol aminopeptidase, found in Synechococcus sp. (strain JA-3-3Ab) (Cyanobacteria bacterium Yellowstone A-Prime).